The sequence spans 409 residues: Nucleoprotein (409 aa).

4 disordered regions span residues 1–32 (MASG…SSGN), 46–84 (SPQP…KGRR), 121–194 (ADVK…GSED), and 238–259 (VDQV…DKMN). An RNA-binding region spans residues 29–160 (SSGNASWFQA…GNFRWDFIPL (132 aa)). The CoV N NTD domain maps to 31–156 (GNASWFQAIK…GGPDGNFRWD (126 aa)). Over residues 70 to 84 (YWRRQARFKPGKGRR) the composition is skewed to basic residues. Low complexity predominate over residues 162 to 179 (RGRSGRSTAASSAASSRP). Composition is skewed to basic and acidic residues over residues 180 to 192 (PSRE…RSGS) and 247 to 259 (KGKE…DKMN). A phosphoserine; by host mark is found at serine 190 and serine 192. Positions 215 to 331 (TKAKADEMAH…QCVDGVGTRP (117 aa)) constitute a CoV N CTD domain. A dimerization region spans residues 226–333 (RYCKRTIPPG…VDGVGTRPKD (108 aa)). Residues cysteine 320 and cysteine 323 are joined by a disulfide bond. The tract at residues 326 to 409 (GVGTRPKDDE…GDSALGENEL (84 aa)) is disordered. A compositionally biased stretch (low complexity) spans 341 to 356 (RSSSRPATRTSSPAPR). The span at 358 to 367 (QRLKKEKRPK) shows a compositional bias: basic residues. The span at 368–384 (KQDDEVDKALTSDEERN) shows a compositional bias: basic and acidic residues. Threonine 378 bears the Phosphothreonine; by host mark. Serine 379 is subject to Phosphoserine; by host.

It belongs to the gammacoronavirus nucleocapsid protein family. In terms of assembly, homooligomer. Both monomeric and oligomeric forms interact with RNA. Interacts with protein M. Interacts with NSP3; this interaction serves to tether the genome to the newly translated replicase-transcriptase complex at a very early stage of infection. Post-translationally, ADP-ribosylated. The ADP-ribosylation is retained in the virion during infection. Phosphorylated on serine and threonine residues.

The protein resides in the virion. Its subcellular location is the host endoplasmic reticulum-Golgi intermediate compartment. It is found in the host Golgi apparatus. In terms of biological role, packages the positive strand viral genome RNA into a helical ribonucleocapsid (RNP) and plays a fundamental role during virion assembly through its interactions with the viral genome and membrane protein M. Plays an important role in enhancing the efficiency of subgenomic viral RNA transcription as well as viral replication. In Avian infectious bronchitis virus (strain Gray) (IBV), this protein is Nucleoprotein.